We begin with the raw amino-acid sequence, 418 residues long: MERLLIRGGRRLEGEIRISGAKNAALPIMAATLLADGPMTVGNIPHLHDITTTMELLGRMGVGLTVDERMRVEADPRSLHSCHAPYELVKTMRASILVLGPLLARYGEAQVSLPGGCAIGSRPVNLHVEGLRAMGAELTVEEGYIKARCDRLRGARIVLELVTVTGTENLMMAAALAEGTTVIENAAREPEVVDLADCLNAMGAKIQGAGTDTLTIEGVERLNGIHYDVLPDRIESGTYLIAAAITGGRIKLKDTAPKLLDAVLVKLEEAGARIETGPDWISLEMEGRPRSVSVRTAPYPGFPTDMQAQFCALDCIAEGTGTITETVFENRFMHCLEMQRMGADIRIEGNTAILRGVPALKGAPVMATDLRASASLVLAGLVARGETRVDRIYHIDRGYECIEEKLAQLGADIRRVPA.

22 to 23 (KN) provides a ligand contact to phosphoenolpyruvate. Arginine 93 lines the UDP-N-acetyl-alpha-D-glucosamine pocket. The active-site Proton donor is the cysteine 117. Cysteine 117 is subject to 2-(S-cysteinyl)pyruvic acid O-phosphothioketal. UDP-N-acetyl-alpha-D-glucosamine is bound by residues aspartate 305 and valine 327.

The protein belongs to the EPSP synthase family. MurA subfamily.

It is found in the cytoplasm. It carries out the reaction phosphoenolpyruvate + UDP-N-acetyl-alpha-D-glucosamine = UDP-N-acetyl-3-O-(1-carboxyvinyl)-alpha-D-glucosamine + phosphate. It functions in the pathway cell wall biogenesis; peptidoglycan biosynthesis. Cell wall formation. Adds enolpyruvyl to UDP-N-acetylglucosamine. The polypeptide is UDP-N-acetylglucosamine 1-carboxyvinyltransferase (Alkalilimnicola ehrlichii (strain ATCC BAA-1101 / DSM 17681 / MLHE-1)).